The primary structure comprises 940 residues: MSDYKFTLNLPETEFPMRGNLANREPEMLERWTKDGLYQQIRDSRIGRTPFILHDGPPYANGSIHIGHSVNKILKDIIIKSKTMSGFDAPYVPGWDCHGLPIELKVEQKVGKPGQKISAAEFREECRKYAAEQVNGQREDFIRLGVLGDWQNPYLTMDFSTEANIVRSLSKVIESGHLHKGVKPVHWCTDCGSALAEAEVEYEDKTSPAIDVAFVAADSKAVAAKFGVSGYSHPVSMVIWTTTPWTLPANRALSLSPELDYSLVEFEKDGVTQALILAEVLVESCLTRYNVESHTVLGSAKGAAFELVRFNHPFLDFDVPAILGDHVTTDAGTGIVHTAPGHGQDDFVVGQKYGLEVANPVGDNGVYKPDTEYFAGQHVFKANDNVVALLREKSALLNHVAYRHSYPHCWRHKTPIIFRATPQWFISMDNHGLRTQALKEIEQTQWIPDWGQSRIEKMVENRPDWCISRQRTWGVPITLFVNRETEELHSDSVSLMERVASRIEQQGIQAWWDLDAAELLGDEAEQYRKVTDTLDVWFDSGSTFSSVVAARPEFHGHGVDLYLEGSDQHRGWFMSSLMISTAMNGKAPYKQVLTHGFTVDGKGRKMSKSIGNVIAPQTVTNKLGADILRLWVAATDYSGEMTVSDEILNRSADAYRRIRNTARFLLANLNGFEPAKDLVAVEDMVALDRWVVRRAAALQQEIIEAYEQYNFHIVTQKLMQFCSVELGSFYLDIIKDRQYTAKQEGHARRSCQSALYLISEAMVRWIAPILSFTADEVWQLLPGERDAYVFTQEWYQGLKSVTLATDLSDDYWQQLLTVRNEVNKVIEQARRDKRIGGSLEAEVTLFADAALTEQLTHIGDELRFVLLTSEAKVLPLADATSEAVETELASLKLLVASSTAEKCERCWHHREEVGTIEAHPTLCTRCVTNIEGDGEVRLFA.

Positions 58 to 68 match the 'HIGH' region motif; it reads PYANGSIHIGH. Glu-564 provides a ligand contact to L-isoleucyl-5'-AMP. Positions 605–609 match the 'KMSKS' region motif; sequence KMSKS. Position 608 (Lys-608) interacts with ATP. 4 residues coordinate Zn(2+): Cys-903, Cys-906, Cys-923, and Cys-926.

The protein belongs to the class-I aminoacyl-tRNA synthetase family. IleS type 1 subfamily. As to quaternary structure, monomer. The cofactor is Zn(2+).

The protein resides in the cytoplasm. The catalysed reaction is tRNA(Ile) + L-isoleucine + ATP = L-isoleucyl-tRNA(Ile) + AMP + diphosphate. In terms of biological role, catalyzes the attachment of isoleucine to tRNA(Ile). As IleRS can inadvertently accommodate and process structurally similar amino acids such as valine, to avoid such errors it has two additional distinct tRNA(Ile)-dependent editing activities. One activity is designated as 'pretransfer' editing and involves the hydrolysis of activated Val-AMP. The other activity is designated 'posttransfer' editing and involves deacylation of mischarged Val-tRNA(Ile). This is Isoleucine--tRNA ligase from Shewanella baltica (strain OS185).